The following is a 315-amino-acid chain: DNA-directed RNA polymerase subunit alpha (315 aa).

Residues 1-228 form an alpha N-terminal domain (alpha-NTD) region; the sequence is MLEIEKPKIE…EHLRLFIGLT (228 aa). An alpha C-terminal domain (alpha-CTD) region spans residues 246–315; the sequence is DKILEMTIEE…LGLSLRQEDE (70 aa).

The protein belongs to the RNA polymerase alpha chain family. As to quaternary structure, homodimer. The RNAP catalytic core consists of 2 alpha, 1 beta, 1 beta' and 1 omega subunit. When a sigma factor is associated with the core the holoenzyme is formed, which can initiate transcription.

The catalysed reaction is RNA(n) + a ribonucleoside 5'-triphosphate = RNA(n+1) + diphosphate. Functionally, DNA-dependent RNA polymerase catalyzes the transcription of DNA into RNA using the four ribonucleoside triphosphates as substrates. This chain is DNA-directed RNA polymerase subunit alpha, found in Desulforamulus reducens (strain ATCC BAA-1160 / DSM 100696 / MI-1) (Desulfotomaculum reducens).